We begin with the raw amino-acid sequence, 170 residues long: Protein SprT (170 aa).

Positions 23–165 (QLANQHLGTD…RECGEKLQFV (143 aa)) constitute a SprT-like domain. His78 is a binding site for Zn(2+). Residue Glu79 is part of the active site. Zn(2+) is bound at residue His82.

This sequence belongs to the SprT family. It depends on Zn(2+) as a cofactor.

It is found in the cytoplasm. This chain is Protein SprT, found in Yersinia enterocolitica serotype O:8 / biotype 1B (strain NCTC 13174 / 8081).